A 25-amino-acid chain; its full sequence is Ocellatin-L1 (25 aa).

Leucine amide is present on L25.

Belongs to the frog skin active peptide (FSAP) family. Ocellatin subfamily. As to expression, expressed by the skin glands.

Its subcellular location is the secreted. Its function is as follows. Antimicrobial peptide with activity against Gram-negative bacteria but without activity against Gram-positive bacteria. Shows a low activity in stimulating insulin release from rat BRIN-BD11 beta cells, and acts without loss of integrity of the plasma membrane. Has very low hemolytic activity. Shows weak amphipathicity in its alpha-helical conformation. This chain is Ocellatin-L1, found in Leptodactylus laticeps (Santa Fe frog).